Here is a 327-residue protein sequence, read N- to C-terminus: Fumigatonoid B endoperoxide isomerase nvfE (327 aa).

Residues M1–L22 form a disordered region. Positions 152, 154, and 234 each coordinate Fe cation.

Belongs to the PhyH family. As to quaternary structure, homodimer. Fe cation serves as cofactor.

It catalyses the reaction fumigatonoid B = fumigatonoid C. It participates in secondary metabolite biosynthesis; terpenoid biosynthesis. Its function is as follows. Fumigatonoid B endoperoxide isomerase; part of the gene cluster that mediates the biosynthesis of novofumigatonin, a heavily oxygenated meroterpenoid containing a unique orthoester moiety. The first step of the pathway is the synthesis of 3,5-dimethylorsellinic acid (DMOA) by the polyketide synthase nvfA via condensation of one acetyl-CoA starter unit with 3 malonyl-CoA units and 2 methylations. DMOA is then converted to farnesyl-DMOA by the farnesyltransferase nvfB. Epoxydation by FAD-dependent monooxygenase nvfK, followed by a protonation-initiated cyclization catalyzed by the terpene cyclase nvfL leads to the production of asnavolin H. The short chain dehydrogenase nvfC then as a 3-OH dehydrogenase of asnovolin H to yield chemesin D. There are two branches to synthesize asnovolin A from chemesin D. In one branch, chemesin D undergoes Baeyer-Villiger oxidation by nvfH, methylation by nvfJ, and enoyl reduction by the nvfM D enoylreductase that reduces the double bond between C-5'and C-6', to form respectively asnovolin I, asnovolin K, and asnovolin A. In the other branch, the methylation precedes the Baeyer-Villiger oxidation and the enoyl reduction to yield asnovolin A via the asnovolin J intermediate. Asnovolin A is further converted to fumigatonoid A by the Fe(II)/2-oxoglutarate-dependent dioxygenase nvfI that catalyzes an endoperoxidation reaction. The alpha/beta hydrolase nvfD then acts as an epimerase that converts fumigatonoid A to its C-5' epimer, which then undergoes spontaneous or nvfD-catalyzed lactonization. The following step utilizes the ketoreductase nvfG to produce fumigatonoid B. The dioxygenase nvfE further converts fumigatonoid B into fumigatonoid C. Finally the Fe(II)/2-oxoglutarate-dependent dioxygenase nvfF catalyzes two rounds of oxidation to transform fumigatonoid C into the end product, novofumigatonin A. This chain is Fumigatonoid B endoperoxide isomerase nvfE, found in Aspergillus novofumigatus (strain IBT 16806).